We begin with the raw amino-acid sequence, 286 residues long: Shikimate dehydrogenase (NADP(+)) (286 aa).

Residues 20 to 22 (SLS) and Ser-67 each bind shikimate. The active-site Proton acceptor is the Lys-71. Positions 92 and 107 each coordinate shikimate. Residues 131–135 (GGGGA) and Ala-230 contribute to the NADP(+) site. Residue Tyr-232 coordinates shikimate. NADP(+) is bound at residue Gly-253.

Belongs to the shikimate dehydrogenase family. As to quaternary structure, homodimer.

The catalysed reaction is shikimate + NADP(+) = 3-dehydroshikimate + NADPH + H(+). It participates in metabolic intermediate biosynthesis; chorismate biosynthesis; chorismate from D-erythrose 4-phosphate and phosphoenolpyruvate: step 4/7. Functionally, involved in the biosynthesis of the chorismate, which leads to the biosynthesis of aromatic amino acids. Catalyzes the reversible NADPH linked reduction of 3-dehydroshikimate (DHSA) to yield shikimate (SA). The chain is Shikimate dehydrogenase (NADP(+)) from Lactococcus lactis subsp. lactis (strain IL1403) (Streptococcus lactis).